A 416-amino-acid chain; its full sequence is Ribulose bisphosphate carboxylase large chain (416 aa).

Residues asparagine 102 and threonine 152 each coordinate substrate. Lysine 154 serves as the catalytic Proton acceptor. Position 156 (lysine 156) interacts with substrate. Mg(2+)-binding residues include lysine 180, aspartate 182, and glutamate 183. Lysine 180 is modified (N6-carboxylysine). Histidine 273 serves as the catalytic Proton acceptor. Substrate contacts are provided by arginine 274, histidine 306, and serine 358.

It belongs to the RuBisCO large chain family. Type I subfamily. In terms of assembly, heterohexadecamer of 8 large chains and 8 small chains; disulfide-linked. The disulfide link is formed within the large subunit homodimers. Mg(2+) is required as a cofactor. The disulfide bond which can form in the large chain dimeric partners within the hexadecamer appears to be associated with oxidative stress and protein turnover.

Its subcellular location is the plastid. The protein localises to the chloroplast. The enzyme catalyses 2 (2R)-3-phosphoglycerate + 2 H(+) = D-ribulose 1,5-bisphosphate + CO2 + H2O. It carries out the reaction D-ribulose 1,5-bisphosphate + O2 = 2-phosphoglycolate + (2R)-3-phosphoglycerate + 2 H(+). In terms of biological role, ruBisCO catalyzes two reactions: the carboxylation of D-ribulose 1,5-bisphosphate, the primary event in carbon dioxide fixation, as well as the oxidative fragmentation of the pentose substrate in the photorespiration process. Both reactions occur simultaneously and in competition at the same active site. The sequence is that of Ribulose bisphosphate carboxylase large chain (rbcL) from Arthropteris beckleri (Fern).